The following is a 142-amino-acid chain: Large ribosomal subunit protein uL13 (142 aa).

The protein belongs to the universal ribosomal protein uL13 family. As to quaternary structure, part of the 50S ribosomal subunit.

Its function is as follows. This protein is one of the early assembly proteins of the 50S ribosomal subunit, although it is not seen to bind rRNA by itself. It is important during the early stages of 50S assembly. The sequence is that of Large ribosomal subunit protein uL13 from Wigglesworthia glossinidia brevipalpis.